The following is a 151-amino-acid chain: Ribosomal RNA large subunit methyltransferase H (151 aa).

Residues Leu-70, Gly-99, and 118–123 each bind S-adenosyl-L-methionine; that span reads LSKLTF.

It belongs to the RNA methyltransferase RlmH family. Homodimer.

The protein localises to the cytoplasm. It catalyses the reaction pseudouridine(1915) in 23S rRNA + S-adenosyl-L-methionine = N(3)-methylpseudouridine(1915) in 23S rRNA + S-adenosyl-L-homocysteine + H(+). Its function is as follows. Specifically methylates the pseudouridine at position 1915 (m3Psi1915) in 23S rRNA. The protein is Ribosomal RNA large subunit methyltransferase H of Gloeobacter violaceus (strain ATCC 29082 / PCC 7421).